A 165-amino-acid chain; its full sequence is MKCKTLLIACLFGLGSAQALAVSKLPPQIPVHAGSGRVTLDLRPLLAETNDVEITRVSVCRRVGSHCQETLWRIELPPGWRAGEIEVFGDYPGSSVLLRRPERLQPDGSYNAFIHFNERSRRHRQTVSSIAVEFCLAGEPGNWMLLDEATCLARRNAEERQGEKP.

Positions 1–21 are cleaved as a signal peptide; that stretch reads MKCKTLLIACLFGLGSAQALA.

Interacts with the Tle3 toxin.

Its subcellular location is the periplasm. Functionally, immunity protein that neutralizes the toxicity of the P.aeruginosa antibacterial toxin Tle3 in the periplasm to protect the cell from fratricide intoxication. The chain is Type VI lipase immunity protein Tli3 from Pseudomonas aeruginosa (strain ATCC 15692 / DSM 22644 / CIP 104116 / JCM 14847 / LMG 12228 / 1C / PRS 101 / PAO1).